A 417-amino-acid chain; its full sequence is Histidine biosynthesis bifunctional protein his7 (417 aa).

Residues 225–299 (GLVYSSKESV…HLDTLHCFGQ (75 aa)) are phosphoribosyl-AMP cyclohydrolase. The tract at residues 303-387 (LCQLEKTLID…ISRHLDLKHR (85 aa)) is phosphoribosyl-ATP pyrophosphohydrolase.

Its subcellular location is the cytoplasm. The catalysed reaction is 1-(5-phospho-beta-D-ribosyl)-5'-AMP + H2O = 1-(5-phospho-beta-D-ribosyl)-5-[(5-phospho-beta-D-ribosylamino)methylideneamino]imidazole-4-carboxamide. The enzyme catalyses 1-(5-phospho-beta-D-ribosyl)-ATP + H2O = 1-(5-phospho-beta-D-ribosyl)-5'-AMP + diphosphate + H(+). The protein operates within amino-acid biosynthesis; L-histidine biosynthesis; L-histidine from 5-phospho-alpha-D-ribose 1-diphosphate: step 2/9. It participates in amino-acid biosynthesis; L-histidine biosynthesis; L-histidine from 5-phospho-alpha-D-ribose 1-diphosphate: step 3/9. This chain is Histidine biosynthesis bifunctional protein his7, found in Schizosaccharomyces pombe (strain 972 / ATCC 24843) (Fission yeast).